The chain runs to 280 residues: MSFAALEKTIDAAWEARDGINLQTKGEVRDAVEAALDALDSGSLRVAAKGDDGKWVVNQWLKKAVLLSFRLSDNKVMGDGPGTTWFDKVPTKFEGWDDSRFRAAGFRAVPGAVVRRSAYIAPGVVLMPSFVNLGAHVGSGTMVDTWATVGSCAQIGKNVHISGGAGIGGVLEPLQAGPVIIEDNCFIGARAEVAEGVIVETGAVLSMGVYIGASTKIVDRETGEIFMGRVPAYSVVVSGTMPGKPFPDGTPGPGLYCAVIVKRVDERTRSKVGINELLRD.

Substrate contacts are provided by Arg107 and Asp144.

Belongs to the transferase hexapeptide repeat family. In terms of assembly, homotrimer.

It is found in the cytoplasm. It catalyses the reaction (S)-2,3,4,5-tetrahydrodipicolinate + succinyl-CoA + H2O = (S)-2-succinylamino-6-oxoheptanedioate + CoA. The protein operates within amino-acid biosynthesis; L-lysine biosynthesis via DAP pathway; LL-2,6-diaminopimelate from (S)-tetrahydrodipicolinate (succinylase route): step 1/3. This is 2,3,4,5-tetrahydropyridine-2,6-dicarboxylate N-succinyltransferase from Paramagnetospirillum magneticum (strain ATCC 700264 / AMB-1) (Magnetospirillum magneticum).